A 318-amino-acid chain; its full sequence is Pantothenate kinase (318 aa).

96–103 lines the ATP pocket; it reads GSVAVGKS.

It belongs to the prokaryotic pantothenate kinase family.

The protein resides in the cytoplasm. The enzyme catalyses (R)-pantothenate + ATP = (R)-4'-phosphopantothenate + ADP + H(+). The protein operates within cofactor biosynthesis; coenzyme A biosynthesis; CoA from (R)-pantothenate: step 1/5. The protein is Pantothenate kinase of Rhodopseudomonas palustris (strain ATCC BAA-98 / CGA009).